A 211-amino-acid polypeptide reads, in one-letter code: Ras-related protein RABB1c (211 aa).

Position 2 is an N-acetylserine (S2). GTP is bound at residue 13 to 21 (GDTGVGKSC). The Effector region signature appears at 35 to 43 (HDLTIGVEF). GTP contacts are provided by residues 61–65 (DTAGQ), 119–122 (NKCD), and 149–151 (SAK). S-geranylgeranyl cysteine attachment occurs at residues C209 and C210.

This sequence belongs to the small GTPase superfamily. Rab family.

It is found in the cell membrane. In terms of biological role, intracellular vesicle trafficking and protein transport. The sequence is that of Ras-related protein RABB1c (RABB1C) from Arabidopsis thaliana (Mouse-ear cress).